Reading from the N-terminus, the 123-residue chain is Large ribosomal subunit protein uL14 (123 aa).

The protein belongs to the universal ribosomal protein uL14 family. As to quaternary structure, part of the 50S ribosomal subunit. Forms a cluster with proteins L3 and L19. In the 70S ribosome, L14 and L19 interact and together make contacts with the 16S rRNA in bridges B5 and B8.

Binds to 23S rRNA. Forms part of two intersubunit bridges in the 70S ribosome. This Tropheryma whipplei (strain TW08/27) (Whipple's bacillus) protein is Large ribosomal subunit protein uL14.